The sequence spans 950 residues: Coatomer subunit beta-2 (950 aa).

HEAT repeat units follow at residues 92-126 (PEMILICQNLRNNLHHPNEYIRGVTLRFLCRLSEP), 127-164 (EVLEPLVPSILENLDHRHHFIRRHALSAISSIYRLPHG), 275-312 (TAVRAAANTYCELLSSQSDNNVKLIVLDRLNELRTSHR), 313-350 (DVMVDVVMDVLRALASPNLDVKRKVLDLVLDLLTARNV), and 392-429 (EVAGSVVHLLMDFLGDTNVAAAVDVVLFVREIIETNPK).

Oligomeric complex that consists of at least the alpha, beta, beta', gamma, delta, epsilon and zeta subunits.

The protein localises to the cytoplasm. The protein resides in the golgi apparatus membrane. Its subcellular location is the cytoplasmic vesicle. It is found in the COPI-coated vesicle membrane. In terms of biological role, the coatomer is a cytosolic protein complex that binds to dilysine motifs and reversibly associates with Golgi non-clathrin-coated vesicles, which further mediate biosynthetic protein transport from the ER, via the Golgi up to the trans Golgi network. Coatomer complex is required for budding from Golgi membranes, and is essential for the retrograde Golgi-to-ER transport of dilysine-tagged proteins. The chain is Coatomer subunit beta-2 from Oryza sativa subsp. japonica (Rice).